A 351-amino-acid chain; its full sequence is Translation initiation factor eIF2B subunit beta (351 aa).

It belongs to the eIF-2B alpha/beta/delta subunits family. Component of the translation initiation factor 2B (eIF2B) complex which is a heterodecamer of two sets of five different subunits: alpha, beta, gamma, delta and epsilon. Subunits alpha, beta and delta comprise a regulatory subcomplex and subunits epsilon and gamma comprise a catalytic subcomplex. Within the complex, the hexameric regulatory complex resides at the center, with the two heterodimeric catalytic subcomplexes bound on opposite sides.

Its subcellular location is the cytoplasm. It localises to the cytosol. Activated by the chemical integrated stress response (ISR) inhibitor ISRIB which stimulates guanine nucleotide exchange factor activity for both phosphorylated and unphosphorylated eIF2. Functionally, acts as a component of the translation initiation factor 2B (eIF2B) complex, which catalyzes the exchange of GDP for GTP on eukaryotic initiation factor 2 (eIF2) gamma subunit. Its guanine nucleotide exchange factor activity is repressed when bound to eIF2 complex phosphorylated on the alpha subunit, thereby limiting the amount of methionyl-initiator methionine tRNA available to the ribosome and consequently global translation is repressed. The sequence is that of Translation initiation factor eIF2B subunit beta (EIF2B2) from Oryctolagus cuniculus (Rabbit).